Here is a 115-residue protein sequence, read N- to C-terminus: Large ribosomal subunit protein P2 (115 aa).

Position 1 is an N-acetylmethionine (Met1). Residues Ser17 and Ser19 each carry the phosphoserine modification. Lys21 is modified (N6-acetyllysine; alternate). An N6-succinyllysine; alternate modification is found at Lys21. Residues 76-90 show a composition bias toward low complexity; the sequence is APGSAAPAAGSAPAA. The disordered stretch occupies residues 76–115; the sequence is APGSAAPAAGSAPAAAEEKKDEKKEESEESDDDMGFGLFD. 2 positions are modified to phosphoserine: Ser79 and Ser86. The span at 91 to 101 shows a compositional bias: basic and acidic residues; sequence AEEKKDEKKEE. A phosphoserine mark is found at Ser102 and Ser105.

Belongs to the eukaryotic ribosomal protein P1/P2 family. As to quaternary structure, heterodimer with RPLP1 at the lateral ribosomal stalk of the large ribosomal subunit.

Functionally, plays an important role in the elongation step of protein synthesis. This Mus musculus (Mouse) protein is Large ribosomal subunit protein P2 (Rplp2).